We begin with the raw amino-acid sequence, 874 residues long: Probable inorganic carbon transporter subunit DabA (874 aa).

Positions 398, 400, 580, and 595 each coordinate Zn(2+).

It belongs to the inorganic carbon transporter (TC 9.A.2) DabA family. Forms a complex with DabB. Zn(2+) is required as a cofactor.

The protein localises to the cell membrane. Functionally, part of an energy-coupled inorganic carbon pump. The protein is Probable inorganic carbon transporter subunit DabA of Bacillus cytotoxicus (strain DSM 22905 / CIP 110041 / 391-98 / NVH 391-98).